The chain runs to 739 residues: Glycine--tRNA ligase (739 aa).

A mitochondrion-targeting transit peptide spans 1-36 (MPSPRPVLLRGARAALLLLLPPRLLARPSLLLRRSL). Phosphoserine is present on serine 35. Positions 63–119 (VLAPLRLAVRQQGDLVRKLKEDKAPQVDVDKAVAELKARKRVLEAKELALQPKDDIV) constitute a WHEP-TRS domain. Lysine 204 bears the N6-acetyllysine mark. A glycine-binding site is contributed by glutamate 299. Residues 331–333 (RNE) and 342–343 (RV) contribute to the ATP site. Residue glutamate 350 participates in glycine binding. Tyrosine 453 is modified (phosphotyrosine). 457–458 (EI) provides a ligand contact to ATP. Residue lysine 501 is modified to N6-acetyllysine. Glycine is bound at residue 576 to 578 (EPS). Residue arginine 583 coordinates ATP. Phosphoserine is present on serine 700. Residue threonine 736 is modified to Phosphothreonine.

Belongs to the class-II aminoacyl-tRNA synthetase family. Homodimer. Widely expressed, including in brain and spinal cord. As to expression, expressed in brain, spinal cord, muscle, heart and spleen. In terms of tissue distribution, expressed in brain, spinal cord, muscle, heart, spleen and liver.

It localises to the cytoplasm. It is found in the cell projection. The protein resides in the axon. The protein localises to the secreted. Its subcellular location is the extracellular exosome. It localises to the mitochondrion. It catalyses the reaction tRNA(Gly) + glycine + ATP = glycyl-tRNA(Gly) + AMP + diphosphate. The catalysed reaction is 2 ATP + H(+) = P(1),P(4)-bis(5'-adenosyl) tetraphosphate + diphosphate. Its activity is regulated as follows. Ap4A synthesis is inhibited by tRNA, via the disruption of the second ATP-binding site by direct blocking and/or by tRNA-induced conformational change. Functionally, catalyzes the ATP-dependent ligation of glycine to the 3'-end of its cognate tRNA, via the formation of an aminoacyl-adenylate intermediate (Gly-AMP). Also produces diadenosine tetraphosphate (Ap4A), a universal pleiotropic signaling molecule needed for cell regulation pathways, by direct condensation of 2 ATPs. Thereby, may play a special role in Ap4A homeostasis. This chain is Glycine--tRNA ligase, found in Homo sapiens (Human).